The primary structure comprises 680 residues: 1-deoxy-D-xylulose-5-phosphate synthase (680 aa).

Residues 1 to 17 are compositionally biased toward low complexity; it reads MQQSPHSPQSQSLSASA. The segment at 1-20 is disordered; it reads MQQSPHSPQSQSLSASAVDS. Residues His-113 and 154 to 156 contribute to the thiamine diphosphate site; that span reads GHS. Asp-185 contributes to the Mg(2+) binding site. Residues 186–187, Asn-214, Phe-323, and Glu-408 each bind thiamine diphosphate; that span reads GA. Position 214 (Asn-214) interacts with Mg(2+).

The protein belongs to the transketolase family. DXPS subfamily. Homodimer. Mg(2+) serves as cofactor. Requires thiamine diphosphate as cofactor.

The enzyme catalyses D-glyceraldehyde 3-phosphate + pyruvate + H(+) = 1-deoxy-D-xylulose 5-phosphate + CO2. It functions in the pathway metabolic intermediate biosynthesis; 1-deoxy-D-xylulose 5-phosphate biosynthesis; 1-deoxy-D-xylulose 5-phosphate from D-glyceraldehyde 3-phosphate and pyruvate: step 1/1. Its function is as follows. Catalyzes the acyloin condensation reaction between C atoms 2 and 3 of pyruvate and glyceraldehyde 3-phosphate to yield 1-deoxy-D-xylulose-5-phosphate (DXP). This Psychrobacter cryohalolentis (strain ATCC BAA-1226 / DSM 17306 / VKM B-2378 / K5) protein is 1-deoxy-D-xylulose-5-phosphate synthase.